Consider the following 478-residue polypeptide: Protein nucleotidyltransferase YdiU (478 aa).

8 residues coordinate ATP: Gly84, Gly86, Arg87, Lys107, Asp119, Gly120, Arg170, and Arg177. Residue Asp246 is the Proton acceptor of the active site. Mg(2+) is bound by residues Asn247 and Asp256. Asp256 contributes to the ATP binding site.

It belongs to the SELO family. It depends on Mg(2+) as a cofactor. Requires Mn(2+) as cofactor.

The enzyme catalyses L-seryl-[protein] + ATP = 3-O-(5'-adenylyl)-L-seryl-[protein] + diphosphate. It catalyses the reaction L-threonyl-[protein] + ATP = 3-O-(5'-adenylyl)-L-threonyl-[protein] + diphosphate. The catalysed reaction is L-tyrosyl-[protein] + ATP = O-(5'-adenylyl)-L-tyrosyl-[protein] + diphosphate. It carries out the reaction L-histidyl-[protein] + UTP = N(tele)-(5'-uridylyl)-L-histidyl-[protein] + diphosphate. The enzyme catalyses L-seryl-[protein] + UTP = O-(5'-uridylyl)-L-seryl-[protein] + diphosphate. It catalyses the reaction L-tyrosyl-[protein] + UTP = O-(5'-uridylyl)-L-tyrosyl-[protein] + diphosphate. Its function is as follows. Nucleotidyltransferase involved in the post-translational modification of proteins. It can catalyze the addition of adenosine monophosphate (AMP) or uridine monophosphate (UMP) to a protein, resulting in modifications known as AMPylation and UMPylation. The chain is Protein nucleotidyltransferase YdiU from Escherichia coli (strain SE11).